The sequence spans 389 residues: Large envelope protein (389 aa).

Met1 bears the N-acetylmethionine mark. Gly2 is lipidated: N-myristoyl glycine; by host. A pre-S1 region spans residues 2–108 (GTNLSVPNPL…PPLRDSHPQA (107 aa)). The segment at 2–163 (GTNLSVPNPL…SARTGDPVTI (162 aa)) is pre-S. Residues 2–170 (GTNLSVPNPL…VTIMENITSG (169 aa)) lie on the Virion surface; in external conformation side of the membrane. At 2–242 (GTNLSVPNPL…PGYRWMCLRR (241 aa)) the chain is on the intravirion; in internal conformation side. Polar residues predominate over residues 77–95 (VSTIPPPASTNRQSGRQPT). The interval 77-103 (VSTIPPPASTNRQSGRQPTPISPPLRD) is disordered. The interval 109–163 (MQWNSTALHQALQDPRVRGLYLPAGGSSSGTVNPAPNIASHISSISARTGDPVTI) is pre-S2. The helical transmembrane segment at 171 to 191 (FLGPLLVLQAGFFLLTRILTI) threads the bilayer. Residues 192 to 242 (PQSLDSWWTSLNFLGGSPVCLGQNSQSPTSNHSPTSCPPICPGYRWMCLRR) lie on the Intravirion; in external conformation side of the membrane. A helical transmembrane segment spans residues 243 to 263 (FIIFLFILLLCLIFLLVLLDY). At 264-337 (QGMLPVCPLI…WASVRFSWLS (74 aa)) the chain is on the virion surface side. An N-linked (GlcNAc...) asparagine; by host glycan is attached at Asn309. The chain crosses the membrane as a helical span at residues 338–358 (LLVPFVQWFVGLSPTVWLSAI). Residues 359–364 (WMMWYW) lie on the Intravirion side of the membrane. A helical transmembrane segment spans residues 365–387 (GPSLYSIVSPFIPLLPIFFCLWV). Topologically, residues 388 to 389 (YI) are virion surface.

Belongs to the orthohepadnavirus major surface antigen family. In terms of assembly, in its internal form (Li-HBsAg), interacts with the capsid protein and with the isoform S. Interacts with host chaperone CANX. As to quaternary structure, associates with host chaperone CANX through its pre-S2 N glycan; this association may be essential for isoform M proper secretion. Interacts with isoform L. Interacts with the antigens of satellite virus HDV (HDVAgs); this interaction is required for encapsidation of HDV genomic RNA. Post-translationally, isoform M is N-terminally acetylated by host at a ratio of 90%, and N-glycosylated by host at the pre-S2 region. In terms of processing, myristoylated.

It is found in the virion membrane. Functionally, the large envelope protein exists in two topological conformations, one which is termed 'external' or Le-HBsAg and the other 'internal' or Li-HBsAg. In its external conformation the protein attaches the virus to cell receptors and thereby initiating infection. This interaction determines the species specificity and liver tropism. This attachment induces virion internalization predominantly through caveolin-mediated endocytosis. The large envelope protein also assures fusion between virion membrane and endosomal membrane. In its internal conformation the protein plays a role in virion morphogenesis and mediates the contact with the nucleocapsid like a matrix protein. The middle envelope protein plays an important role in the budding of the virion. It is involved in the induction of budding in a nucleocapsid independent way. In this process the majority of envelope proteins bud to form subviral lipoprotein particles of 22 nm of diameter that do not contain a nucleocapsid. This chain is Large envelope protein, found in Hepatitis B virus genotype A2 subtype adw (isolate Japan/Nishioka/1983) (HBV-A).